The chain runs to 1595 residues: DNA-directed RNA polymerase subunit beta'' (1595 aa).

Zn(2+)-binding residues include Cys-216, Cys-286, Cys-294, and Cys-297.

Belongs to the RNA polymerase beta' chain family. RpoC2 subfamily. In terms of assembly, in plastids the minimal PEP RNA polymerase catalytic core is composed of four subunits: alpha, beta, beta', and beta''. When a (nuclear-encoded) sigma factor is associated with the core the holoenzyme is formed, which can initiate transcription. Zn(2+) serves as cofactor.

Its subcellular location is the plastid. The protein resides in the chloroplast. It carries out the reaction RNA(n) + a ribonucleoside 5'-triphosphate = RNA(n+1) + diphosphate. In terms of biological role, DNA-dependent RNA polymerase catalyzes the transcription of DNA into RNA using the four ribonucleoside triphosphates as substrates. This Bigelowiella natans (Pedinomonas minutissima) protein is DNA-directed RNA polymerase subunit beta''.